The primary structure comprises 268 residues: Aliphatic sulfonates import ATP-binding protein SsuB 2 (268 aa).

Residues 16-230 form the ABC transporter domain; the sequence is VQLRNVVRQF…DSGQAGFQSI (215 aa). Position 48-55 (48-55) interacts with ATP; sequence GASGSGKT.

It belongs to the ABC transporter superfamily. Aliphatic sulfonates importer (TC 3.A.1.17.2) family. As to quaternary structure, the complex is composed of two ATP-binding proteins (SsuB), two transmembrane proteins (SsuC) and a solute-binding protein (SsuA).

The protein resides in the cell inner membrane. It catalyses the reaction ATP + H2O + aliphatic sulfonate-[sulfonate-binding protein]Side 1 = ADP + phosphate + aliphatic sulfonateSide 2 + [sulfonate-binding protein]Side 1.. Functionally, part of the ABC transporter complex SsuABC involved in aliphatic sulfonates import. Responsible for energy coupling to the transport system. In Pseudomonas savastanoi pv. phaseolicola (strain 1448A / Race 6) (Pseudomonas syringae pv. phaseolicola (strain 1448A / Race 6)), this protein is Aliphatic sulfonates import ATP-binding protein SsuB 2.